A 1072-amino-acid chain; its full sequence is DNA-directed RNA polymerase subunit beta (1072 aa).

It belongs to the RNA polymerase beta chain family. In terms of assembly, in plastids the minimal PEP RNA polymerase catalytic core is composed of four subunits: alpha, beta, beta', and beta''. When a (nuclear-encoded) sigma factor is associated with the core the holoenzyme is formed, which can initiate transcription.

Its subcellular location is the plastid. It localises to the chloroplast. The enzyme catalyses RNA(n) + a ribonucleoside 5'-triphosphate = RNA(n+1) + diphosphate. Its function is as follows. DNA-dependent RNA polymerase catalyzes the transcription of DNA into RNA using the four ribonucleoside triphosphates as substrates. The polypeptide is DNA-directed RNA polymerase subunit beta (Draba nemorosa (Woodland whitlowgrass)).